A 125-amino-acid polypeptide reads, in one-letter code: Monothiol glutaredoxin-S2 (125 aa).

The region spanning alanine 28–cysteine 124 is the Glutaredoxin domain. Cysteine 48 contributes to the [2Fe-2S] cluster binding site.

Belongs to the glutaredoxin family. CC-type subfamily.

It is found in the cytoplasm. May only reduce GSH-thiol disulfides, but not protein disulfides. The sequence is that of Monothiol glutaredoxin-S2 (GRXS2) from Oryza sativa subsp. japonica (Rice).